The following is a 437-amino-acid chain: Protein RecA (437 aa).

69–76 (GPESSGKT) provides a ligand contact to ATP. The segment at 343–437 (HDAAVRTSPD…GNGKSVKRKG (95 aa)) is disordered. Polar residues-rich tracts occupy residues 350 to 371 (SPDT…SGSP), 380 to 391 (GAVNNSRDSTGG), and 400 to 426 (LNLS…NQKP).

The protein belongs to the RecA family.

The protein localises to the cytoplasm. Can catalyze the hydrolysis of ATP in the presence of single-stranded DNA, the ATP-dependent uptake of single-stranded DNA by duplex DNA, and the ATP-dependent hybridization of homologous single-stranded DNAs. It interacts with LexA causing its activation and leading to its autocatalytic cleavage. The polypeptide is Protein RecA (Tropheryma whipplei (strain Twist) (Whipple's bacillus)).